Reading from the N-terminus, the 31-residue chain is Kappa-sparatoxin-Hv1c (31 aa).

Disulfide bonds link Cys2–Cys16, Cys9–Cys21, and Cys15–Cys25. Trp31 bears the Tryptophan amide mark.

As to expression, expressed by the venom gland.

The protein localises to the secreted. Blocks transient outward voltage-gated potassium channels in rat ventricular myocytes (thus prolonging action-potential duration) and rat Kv4.2/KCNA4 channels expressed in Xenopus oocytes. Is also a weak blocker of calcium channels in rat cerebellar granule cells. This chain is Kappa-sparatoxin-Hv1c, found in Heteropoda venatoria (Brown huntsman spider).